Consider the following 303-residue polypeptide: Plasmodesmata-located protein 1 (303 aa).

The signal sequence occupies residues 1–21 (MKLTYQFFIFWFFLPFFAISG). Residues 22-268 (DDDYKNLIFK…GEKRQHTERT (247 aa)) are Extracellular-facing. Gnk2-homologous domains follow at residues 27-136 (NLIF…SSGF) and 141-248 (GTEM…YYSH). 6 disulfide bridges follow: cysteine 33-cysteine 108, cysteine 84-cysteine 93, cysteine 96-cysteine 127, cysteine 149-cysteine 226, cysteine 202-cysteine 211, and cysteine 214-cysteine 239. The helical transmembrane segment at 269 to 289 (IALAVGGVFVLGFVIVCLLVL) threads the bilayer. The interval 269-289 (IALAVGGVFVLGFVIVCLLVL) is necessary and sufficient for plasmodesmal targeting. Over 290 to 303 (RSAMKKKSNKYDAY) the chain is Cytoplasmic.

This sequence belongs to the cysteine-rich repeat secretory protein family. Plasmodesmata-located proteins (PDLD) subfamily. In terms of assembly, interacts with AZI1. Interacts with PDLP5. Does not interact with DIR1. As to quaternary structure, (Microbial infection) Interacts with Grapevine fanleaf virus (GFLV) 2B-MP. Interacts with Cauliflower mosaic virus (CaMV) movement protein. As to expression, highly expressed in cell suspension. Expressed in epidermal and spongy mesophyll cells, and the cell wall interface at the base of the leaf trichome (at protein level). Expressed in haustoria-containing cells.

Its subcellular location is the cell membrane. It is found in the cell junction. The protein localises to the plasmodesma. Modulates cell-to-cell trafficking. Required for systemic acquired resistance (SAR) which is mediated by the signaling molecules azelaic acid (AzA), glycerol-3-phosphate (G3P), and salicylic acid (SA). Required for the proper localization and stability of AZI1 which is involved in SAR. Mediates callose deposition during downy mildew fungal infection around haustoria. Haustoria are unicellular protrusions from hyphae and function as the site of molecular exchange of nutrients and effectors between host and pathogen. The sequence is that of Plasmodesmata-located protein 1 from Arabidopsis thaliana (Mouse-ear cress).